Consider the following 61-residue polypeptide: Large ribosomal subunit protein uL30 (61 aa).

Belongs to the universal ribosomal protein uL30 family. Part of the 50S ribosomal subunit.

This chain is Large ribosomal subunit protein uL30, found in Corynebacterium glutamicum (strain ATCC 13032 / DSM 20300 / JCM 1318 / BCRC 11384 / CCUG 27702 / LMG 3730 / NBRC 12168 / NCIMB 10025 / NRRL B-2784 / 534).